A 352-amino-acid polypeptide reads, in one-letter code: tRNA N6-adenosine threonylcarbamoyltransferase (352 aa).

H111 and H115 together coordinate Fe cation. Substrate is bound by residues 133-137 (LASGG), D166, G179, and N275. D300 serves as a coordination point for Fe cation.

It belongs to the KAE1 / TsaD family. Fe(2+) serves as cofactor.

The protein localises to the cytoplasm. The enzyme catalyses L-threonylcarbamoyladenylate + adenosine(37) in tRNA = N(6)-L-threonylcarbamoyladenosine(37) in tRNA + AMP + H(+). In terms of biological role, required for the formation of a threonylcarbamoyl group on adenosine at position 37 (t(6)A37) in tRNAs that read codons beginning with adenine. Is involved in the transfer of the threonylcarbamoyl moiety of threonylcarbamoyl-AMP (TC-AMP) to the N6 group of A37, together with TsaE and TsaB. TsaD likely plays a direct catalytic role in this reaction. The chain is tRNA N6-adenosine threonylcarbamoyltransferase from Treponema pallidum (strain Nichols).